The sequence spans 89 residues: Translation initiation factor IF-1 1 (89 aa).

The 73-residue stretch at 1–73 (MSNKEQLIEM…TKGRITFRHL (73 aa)) folds into the S1-like domain.

Belongs to the IF-1 family. In terms of assembly, component of the 30S ribosomal translation pre-initiation complex which assembles on the 30S ribosome in the order IF-2 and IF-3, IF-1 and N-formylmethionyl-tRNA(fMet); mRNA recruitment can occur at any time during PIC assembly.

It localises to the cytoplasm. Its function is as follows. One of the essential components for the initiation of protein synthesis. Stabilizes the binding of IF-2 and IF-3 on the 30S subunit to which N-formylmethionyl-tRNA(fMet) subsequently binds. Helps modulate mRNA selection, yielding the 30S pre-initiation complex (PIC). Upon addition of the 50S ribosomal subunit IF-1, IF-2 and IF-3 are released leaving the mature 70S translation initiation complex. The polypeptide is Translation initiation factor IF-1 1 (Acidovorax sp. (strain JS42)).